We begin with the raw amino-acid sequence, 309 residues long: RING finger protein mug145 (309 aa).

The chain crosses the membrane as a helical span at residues 23–43 (ILLFALVIILSVIFINFFFFY). The RING-type; atypical zinc finger occupies 205-247 (CIICYADYAFDDILRVLPCEHVFHTQCIDTWMTTMKASCPLCN).

It localises to the membrane. In terms of biological role, has a role in meiosis. This Schizosaccharomyces pombe (strain 972 / ATCC 24843) (Fission yeast) protein is RING finger protein mug145 (mug145).